The sequence spans 1027 residues: D-2-hydroxyglutarate dehydrogenase (1027 aa).

Positions 48–284 (YQQLPQAILF…CEAKLNLLLI (237 aa)) constitute an FAD-binding PCMH-type domain. The (R)-2-hydroxyglutarate site is built by R405 and H503. Positions 665 to 696 (HEVKAAMDTCLACKACASQCPIKIDVPSFRAK) constitute a 4Fe-4S ferredoxin-type domain. C674, C677, C680, and C684 together coordinate [4Fe-4S] cluster.

In the N-terminal section; belongs to the FAD-binding oxidoreductase/transferase type 4 family. In terms of assembly, homotetramer. The cofactor is [4Fe-4S] cluster. FAD is required as a cofactor.

The enzyme catalyses (R)-2-hydroxyglutarate + A = 2-oxoglutarate + AH2. In terms of biological role, catalyzes the oxidation of D-2-hydroxyglutarate (D-2-HGA) to 2-oxoglutarate. Provides the way to recycle D-2-HGA produced during L-serine synthesis by SerA, by converting it back to 2-oxoglutarate. The physiological molecule that functions as the primary electron acceptor during D-2-HGA oxidation is unknown. The chain is D-2-hydroxyglutarate dehydrogenase from Haemophilus influenzae (strain ATCC 51907 / DSM 11121 / KW20 / Rd).